Reading from the N-terminus, the 114-residue chain is UPF0102 protein HPSH_02690 (114 aa).

The protein belongs to the UPF0102 family.

This is UPF0102 protein HPSH_02690 from Helicobacter pylori (strain Shi470).